The sequence spans 439 residues: Gnt-II system L-idonate transporter (439 aa).

Topologically, residues 1–11 (MPLIIIAAGVA) are periplasmic. The helical transmembrane segment at 12-34 (LLLILMIGFKVNGFIALVLVAAV) threads the bilayer. Topologically, residues 35–53 (VGFAEGMDAQAVLHSIQNG) are cytoplasmic. A helical transmembrane segment spans residues 54 to 76 (IGSTLGGLAMILGFGAMLGKLIS). Over 77–96 (DTGAAQRIATTLIATFGKKR) the chain is Periplasmic. A helical transmembrane segment spans residues 97-114 (VQWALVITGLVVGLAMFF). The Cytoplasmic portion of the chain corresponds to 115-118 (EVGF). A helical transmembrane segment spans residues 119–141 (VLLLPLVFTIVASSGLPLLYVGV). Residues 142–170 (PMVAALSVTHCFLPPHPGPTAIATIFEAN) lie on the Periplasmic side of the membrane. A helical transmembrane segment spans residues 171-193 (LGTTLLYGFIITIPTVIVAGPLF). Over 194 to 218 (SKLLTRFEKAPPEGLFNPHLFSEEE) the chain is Cytoplasmic. The helical transmembrane segment at 219–241 (MPSFWNSIFAAVIPVILMAIAAV) threads the bilayer. Over 242–253 (CEITLPKTNTVR) the chain is Periplasmic. Residues 254–276 (LFFEFVGNPAVALFIAIVIAIFT) traverse the membrane as a helical segment. Residues 277 to 290 (LGRRNGRTIEQIMD) lie on the Cytoplasmic side of the membrane. The chain crosses the membrane as a helical span at residues 291-310 (IIGDSIGAIAMIVFIIAGGG). Residues 311 to 322 (AFKQVLVDSGVG) lie on the Periplasmic side of the membrane. A helical membrane pass occupies residues 323–345 (HYISHLMTGTTLSPLLMCWTVAA). The Cytoplasmic segment spans residues 346–348 (LLR). Residues 349–371 (IALGSATVAAITTAGVVLPIINV) traverse the membrane as a helical segment. Topologically, residues 372 to 377 (THADPA) are periplasmic. A helical membrane pass occupies residues 378–400 (LMVLATGAGSVIASHVNDPGFWL). Topologically, residues 401-414 (FKGYFNLTVGETLR) are cytoplasmic. A helical transmembrane segment spans residues 415-437 (TWTVMETLISIMGLLGVLAINAV). At 438–439 (LH) the chain is on the periplasmic side.

Belongs to the GntP permease family.

The protein localises to the cell inner membrane. It catalyses the reaction L-idonate(in) + H(+)(in) = L-idonate(out) + H(+)(out). The catalysed reaction is D-gluconate(in) + H(+)(in) = D-gluconate(out) + H(+)(out). It carries out the reaction 5-dehydro-D-gluconate(in) + H(+)(in) = 5-dehydro-D-gluconate(out) + H(+)(out). The protein operates within carbohydrate acid metabolism; L-idonate degradation. Functionally, transporter which is probably involved in L-idonate metabolism. Transports L-idonate from the periplasm across the inner membrane. Can also transport D-gluconate and 5-keto-D-gluconate. It has been reported that gluconate uptake probably occurs via a proton-symport mechanism in E.coli. This Escherichia coli (strain K12) protein is Gnt-II system L-idonate transporter.